The sequence spans 159 residues: Nucleotide-binding protein PSPA7_4966 (159 aa).

Belongs to the YajQ family.

Nucleotide-binding protein. In Pseudomonas paraeruginosa (strain DSM 24068 / PA7) (Pseudomonas aeruginosa (strain PA7)), this protein is Nucleotide-binding protein PSPA7_4966.